Consider the following 42-residue polypeptide: Alpha-conotoxin VnIB (42 aa).

Positions 1 to 22 (ASDGRNAAADDKASDPIALTVR) are excised as a propeptide. Cystine bridges form between C25–C31 and C26–C38. Glycine amide is present on G39.

Belongs to the conotoxin A superfamily. As to expression, expressed by the venom duct.

It localises to the secreted. Functionally, alpha-conotoxins act on postsynaptic membranes, they bind to the nicotinic acetylcholine receptors (nAChR) and thus inhibit them. This toxin potently and selectively inhibits human and rat alpha-6-beta-4/CHRNA6-CHRNB4 nAChR (IC(50)=12 nM on rat nAChR). It exhibits rapid binding and unbinding at this receptor. It also shows activity on rat alpha-6-beta-4/CHRNA6-CHRNB4 (IC(50)=12 nM), human alpha-6/alpha-3-beta-4 (CHRNA6/CHRNA3-CHRNB4) (IC(50)=5.3 nM), rat alpha-6/alpha-3-beta-4 (CHRNA6/CHRNA3-CHRNB4) (IC(50)=18 nM), rat alpha-3-beta-4/CHRNA3-CHRNB4 (IC(50)=320 nM), and rat alpha-6/alpha-3-beta-2-beta-3 (CHRNA6/CHRNA3-CHRNB2-CHRNB3) (IC(50)=4 uM). This Conus ventricosus (Mediterranean cone) protein is Alpha-conotoxin VnIB.